The sequence spans 533 residues: Protein mono-ADP-ribosyltransferase PARP3 (533 aa).

Residues 1–30 are disordered; it reads MAPKRKASVQTEGSKKRRQGTEEEDSFRST. The residue at position 6 (K6) is an N6-(ADP-ribosyl)lysine. The residue at position 12 (E12) is an ADP-ribosyl glutamic acid. The short motif at 14–18 is the Nuclear localization signal element; that stretch reads SKKRR. ADP-ribosyl glutamic acid is present on residues E24 and E32. Positions 57–147 constitute a WGR domain; the sequence is GIQVHEDYDC…DRFVAQPNKY (91 aa). D138 bears the ADP-ribosyl aspartic acid mark. Residues E160, E230, E309, and E310 each carry the ADP-ribosyl glutamic acid modification. A PARP alpha-helical domain is found at 181 to 299; sequence PCSLDPATQN…DIELAQTLQA (119 aa). Residues 313–533 form the PARP catalytic domain; the sequence is HPLDRDYQLL…RLRYLLEIHL (221 aa).

The protein belongs to the ARTD/PARP family. Interacts with PARP1; leading to activate PARP1 in absence of DNA. Interacts with PRKDC. Interacts with XRCC5/Ku80; the interaction is dependent on nucleic acids. Interacts with XRCC6/Ku70; the interaction is dependent on nucleic acids. Interacts with EZH2, HDAC1, HDAC2, SUZ12, YY1, LRIG3 and LIG4. In terms of processing, auto-ADP-ribosylated.

It localises to the nucleus. The protein resides in the chromosome. Its subcellular location is the cytoplasm. It is found in the cytoskeleton. The protein localises to the microtubule organizing center. It localises to the centrosome. The protein resides in the centriole. The catalysed reaction is L-aspartyl-[protein] + NAD(+) = 4-O-(ADP-D-ribosyl)-L-aspartyl-[protein] + nicotinamide. The enzyme catalyses L-glutamyl-[protein] + NAD(+) = 5-O-(ADP-D-ribosyl)-L-glutamyl-[protein] + nicotinamide. It carries out the reaction L-lysyl-[protein] + NAD(+) = N(6)-(ADP-D-ribosyl)-L-lysyl-[protein] + nicotinamide + H(+). Its function is as follows. Mono-ADP-ribosyltransferase that mediates mono-ADP-ribosylation of target proteins and plays a key role in the response to DNA damage. Mediates mono-ADP-ribosylation of glutamate, aspartate or lysine residues on target proteins. In contrast to PARP1 and PARP2, it is not able to mediate poly-ADP-ribosylation. Involved in DNA repair by mediating mono-ADP-ribosylation of a limited number of acceptor proteins involved in chromatin architecture and in DNA metabolism, such as histone H2B, XRCC5 and XRCC6. ADP-ribosylation follows DNA damage and appears as an obligatory step in a detection/signaling pathway leading to the reparation of DNA strand breaks. Involved in single-strand break repair by catalyzing mono-ADP-ribosylation of histone H2B on 'Glu-2' (H2BE2ADPr) of nucleosomes containing nicked DNA. Cooperates with the XRCC5-XRCC6 (Ku80-Ku70) heterodimer to limit end-resection thereby promoting accurate NHEJ. Suppresses G-quadruplex (G4) structures in response to DNA damage. Associates with a number of DNA repair factors and is involved in the response to exogenous and endogenous DNA strand breaks. Together with APLF, promotes the retention of the LIG4-XRCC4 complex on chromatin and accelerate DNA ligation during non-homologous end-joining (NHEJ). May link the DNA damage surveillance network to the mitotic fidelity checkpoint. Acts as a negative regulator of immunoglobulin class switch recombination, probably by controlling the level of AICDA /AID on the chromatin. In addition to proteins, also able to ADP-ribosylate DNA: mediates DNA mono-ADP-ribosylation of DNA strand break termini via covalent addition of a single ADP-ribose moiety to a 5'- or 3'-terminal phosphate residues in DNA containing multiple strand breaks. In Mus musculus (Mouse), this protein is Protein mono-ADP-ribosyltransferase PARP3.